The sequence spans 201 residues: Peroxiredoxin-2F, mitochondrial (201 aa).

A mitochondrion-targeting transit peptide spans 1-30; the sequence is MAMSILKLRNLSALRSAANSARIGVSSRGF. The residue at position 37 (Thr-37) is a Phosphothreonine. In terms of domain architecture, Thioredoxin spans 37-201; sequence TDITSAAPGV…TGAEVILGQI (165 aa). Catalysis depends on Cys-89, which acts as the Cysteine sulfenic acid (-SOH) intermediate. The residue at position 149 (Ser-149) is a Phosphoserine.

Belongs to the peroxiredoxin family. Prx5 subfamily. Monomer. As to expression, expressed in the whole plant.

It is found in the mitochondrion matrix. The catalysed reaction is [glutaredoxin]-dithiol + a hydroperoxide = [glutaredoxin]-disulfide + an alcohol + H2O. In terms of biological role, thiol-specific peroxidase that catalyzes the reduction of hydrogen peroxide and organic hydroperoxides to water and alcohols, respectively. Plays a role in cell protection against oxidative stress by detoxifying peroxides. Reduces preferentially hydrogen peroxide rather than alkyl peroxides. May be involved in mitochondrial redox homeostasis. The protein is Peroxiredoxin-2F, mitochondrial (PRXIIF) of Arabidopsis thaliana (Mouse-ear cress).